The chain runs to 333 residues: Glyceraldehyde-3-phosphate dehydrogenase (333 aa).

NAD(+) is bound by residues 11–12, aspartate 35, methionine 79, and serine 121; that span reads RI. D-glyceraldehyde 3-phosphate-binding positions include 150 to 152, threonine 181, 210 to 211, and arginine 233; these read SCT and TG. Cysteine 151 serves as the catalytic Nucleophile. Asparagine 315 is an NAD(+) binding site.

Belongs to the glyceraldehyde-3-phosphate dehydrogenase family. Homotetramer.

Its subcellular location is the cytoplasm. The catalysed reaction is D-glyceraldehyde 3-phosphate + phosphate + NAD(+) = (2R)-3-phospho-glyceroyl phosphate + NADH + H(+). Its pathway is carbohydrate degradation; glycolysis; pyruvate from D-glyceraldehyde 3-phosphate: step 1/5. Its function is as follows. Catalyzes the oxidative phosphorylation of glyceraldehyde 3-phosphate (G3P) to 1,3-bisphosphoglycerate (BPG) using the cofactor NAD. The first reaction step involves the formation of a hemiacetal intermediate between G3P and a cysteine residue, and this hemiacetal intermediate is then oxidized to a thioester, with concomitant reduction of NAD to NADH. The reduced NADH is then exchanged with the second NAD, and the thioester is attacked by a nucleophilic inorganic phosphate to produce BPG. This is Glyceraldehyde-3-phosphate dehydrogenase (gap) from Bacteroides fragilis (strain YCH46).